A 345-amino-acid polypeptide reads, in one-letter code: uncharacterized protein (345 aa).

Its subcellular location is the cell membrane. In terms of biological role, involved in potassium and divalent cation transport. Enhances the transport activity of the cation/potassium transporter CzcD. This is an uncharacterized protein from Bacillus subtilis (strain 168).